The sequence spans 233 residues: Delta-actitoxin-Amc1a (233 aa).

Positions 1 to 18 are cleaved as a signal peptide; it reads MKRIFIVALLFATCLVNA. 2 consecutive propeptides follow at residues 19–29 and 30–33; these read KPSINDADIKR and EPEP. At P39 the chain carries Hydroxyproline. 2 disulfides stabilise this stretch: C40–C51 and C43–C58. Propeptides lie at residues 61-63 and 64-67; these read RKR and EPEP. Hydroxyproline is present on P73. Disulfide bonds link C74–C85 and C77–C92. 2 consecutive propeptides follow at residues 95–97 and 98–101; these read RKR and EPEP. P107 carries the post-translational modification Hydroxyproline. Intrachain disulfides connect C108/C119 and C111/C126. 2 propeptides span residues 129–131 and 132–135; these read RKR and EPEP. A Hydroxyproline modification is found at P141. 2 cysteine pairs are disulfide-bonded: C142–C153 and C145–C160. 2 consecutive propeptides follow at residues 163–165 and 166–169; these read RKR and EPEP. Hydroxyproline is present on P175. Intrachain disulfides connect C176–C187 and C179–C194. 2 consecutive propeptides follow at residues 197–199 and 200–203; these read RKR and EPEP. P209 is modified (hydroxyproline). 2 disulfide bridges follow: C210–C221 and C213–C228. Positions 231-233 are excised as a propeptide; sequence RKR.

This sequence belongs to the sea anemone BBH family. Each Am I peptide may contain 2 disulfide bonds. In terms of processing, the precursor protein seems to be processed in the following sequence: release of the signal peptide and of the propeptide, production of six identical 34-residue peptides by cleavage between Arg and Glu, release of four N-terminal and three C-terminal residues from each peptide and hydroxylation of each Pro in position 6 of the resulting 27-residue peptides.

The protein localises to the secreted. Its subcellular location is the nematocyst. May inhibit voltage-gated sodium channels (Nav). The sequence is that of Delta-actitoxin-Amc1a from Antheopsis maculata (Sea anemone).